We begin with the raw amino-acid sequence, 477 residues long: Methylenetetrahydrofolate--tRNA-(uracil-5-)-methyltransferase TrmFO (477 aa).

Residue 14–19 (GGGLAG) coordinates FAD.

Belongs to the MnmG family. TrmFO subfamily. FAD is required as a cofactor.

The protein localises to the cytoplasm. The catalysed reaction is uridine(54) in tRNA + (6R)-5,10-methylene-5,6,7,8-tetrahydrofolate + NADH + H(+) = 5-methyluridine(54) in tRNA + (6S)-5,6,7,8-tetrahydrofolate + NAD(+). The enzyme catalyses uridine(54) in tRNA + (6R)-5,10-methylene-5,6,7,8-tetrahydrofolate + NADPH + H(+) = 5-methyluridine(54) in tRNA + (6S)-5,6,7,8-tetrahydrofolate + NADP(+). Catalyzes the folate-dependent formation of 5-methyl-uridine at position 54 (M-5-U54) in all tRNAs. This chain is Methylenetetrahydrofolate--tRNA-(uracil-5-)-methyltransferase TrmFO, found in Rhizobium etli (strain ATCC 51251 / DSM 11541 / JCM 21823 / NBRC 15573 / CFN 42).